A 379-amino-acid chain; its full sequence is MTTTTAGKVNLLGLTQPQLEQFFESIGEKRFRAGQVMKWIHHFGVDDFDAMTNVGKALREKLKASAEIRGPEIVSQDISADGTRKWVVRVASGSCVETVYIPQGGRGTLCVSSQAGCALDCSFCSTGKQGFNSDLTAAEVIGQVWIANKSFGTVPAKIDRAITNVVMMGMGEPLLNFDNVVAAMNIMMDDLGYGISKRKVTLSTSGVVPMIDKLGEVIDVSLALSLHAPNDELRNKLVPINKKYPLGMLLDACRRYISRLGEKRVLTVEYTLLKDVNDQPEHAEQMIALLKDTPCKINLIPFNPFPHSGYERPSNNAIRRFQDMLHKGGFNVTVRTTRGDDIDAACGQLVGQVMDRTRRSERYIAVRQLAESESAANRN.

The active-site Proton acceptor is Glu-97. The Radical SAM core domain maps to 103-343 (QGGRGTLCVS…VRTTRGDDID (241 aa)). A disulfide bridge connects residues Cys-110 and Cys-346. Cys-117, Cys-121, and Cys-124 together coordinate [4Fe-4S] cluster. S-adenosyl-L-methionine is bound by residues 171-172 (GE), Ser-203, 225-227 (SLH), and Asn-303. Catalysis depends on Cys-346, which acts as the S-methylcysteine intermediate.

Belongs to the radical SAM superfamily. RlmN family. Requires [4Fe-4S] cluster as cofactor.

Its subcellular location is the cytoplasm. The enzyme catalyses adenosine(2503) in 23S rRNA + 2 reduced [2Fe-2S]-[ferredoxin] + 2 S-adenosyl-L-methionine = 2-methyladenosine(2503) in 23S rRNA + 5'-deoxyadenosine + L-methionine + 2 oxidized [2Fe-2S]-[ferredoxin] + S-adenosyl-L-homocysteine. The catalysed reaction is adenosine(37) in tRNA + 2 reduced [2Fe-2S]-[ferredoxin] + 2 S-adenosyl-L-methionine = 2-methyladenosine(37) in tRNA + 5'-deoxyadenosine + L-methionine + 2 oxidized [2Fe-2S]-[ferredoxin] + S-adenosyl-L-homocysteine. Its function is as follows. Specifically methylates position 2 of adenine 2503 in 23S rRNA and position 2 of adenine 37 in tRNAs. m2A2503 modification seems to play a crucial role in the proofreading step occurring at the peptidyl transferase center and thus would serve to optimize ribosomal fidelity. The chain is Dual-specificity RNA methyltransferase RlmN from Pseudomonas aeruginosa (strain ATCC 15692 / DSM 22644 / CIP 104116 / JCM 14847 / LMG 12228 / 1C / PRS 101 / PAO1).